We begin with the raw amino-acid sequence, 115 residues long: Synaptobrevin homolog 2 (115 aa).

Low complexity predominate over residues 1-16; it reads MSSSVPYDPYVPPEES. The segment at 1-28 is disordered; it reads MSSSVPYDPYVPPEESNSGANPNSQNKT. The Cytoplasmic segment spans residues 1-93; that stretch reads MSSSVPYDPY…MWWKDLKMRM (93 aa). The span at 17 to 28 shows a compositional bias: polar residues; that stretch reads NSGANPNSQNKT. In terms of domain architecture, v-SNARE coiled-coil homology spans 27–87; sequence KTAALRQEID…NRVRKQMWWK (61 aa). The residue at position 58 (serine 58) is a Phosphoserine. A Glycyl lysine isopeptide (Lys-Gly) (interchain with G-Cter in ubiquitin) cross-link involves residue lysine 62. Residue cysteine 94 is the site of S-palmitoyl cysteine attachment. The chain crosses the membrane as a helical; Anchor for type IV membrane protein span at residues 94–112; sequence CLFLVVIILLVVIIVPIVV. Topologically, residues 113–115 are vesicular; the sequence is HFS.

The protein belongs to the synaptobrevin family. In terms of processing, palmitoylated by SWF1.

The protein resides in the endomembrane system. SNC1 and SNC2 are vesicle-targeting proteins essential for normal secretory traffic between the Golgi and the plasma membrane. They may also be involved in vesicle fusion. The protein is Synaptobrevin homolog 2 (SNC2) of Saccharomyces cerevisiae (strain ATCC 204508 / S288c) (Baker's yeast).